Consider the following 1049-residue polypeptide: Bifunctional cytochrome P450/NADPH--P450 reductase (1049 aa).

The segment at 2–472 (TIKEMPQPKT…STEQSAKKVR (471 aa)) is cytochrome P450. Tyr-52 is a (9Z)-hexadecenoate binding site. Cys-401 is a heme binding site. An NADPH--P450 reductase region spans residues 473 to 1049 (KKAENAHNTP…GRYAKDVWAG (577 aa)). In terms of domain architecture, Flavodoxin-like spans 483 to 622 (LLVLYGSNMG…TYEEWREHMW (140 aa)). Residues 489–494 (SNMGTA), 536–539 (SYNG), 570–572 (CGD), and 578–580 (TYQ) each bind FMN. The 233-residue stretch at 660–892 (HGAFSTNVVA…STPQSEFTLP (233 aa)) folds into the FAD-binding FR-type domain.

This sequence in the N-terminal section; belongs to the cytochrome P450 family. FAD serves as cofactor. FMN is required as a cofactor. The cofactor is heme.

The protein localises to the cytoplasm. It carries out the reaction 2 oxidized [cytochrome P450] + NADPH = 2 reduced [cytochrome P450] + NADP(+) + H(+). It catalyses the reaction an organic molecule + reduced [NADPH--hemoprotein reductase] + O2 = an alcohol + oxidized [NADPH--hemoprotein reductase] + H2O + H(+). With respect to regulation, inhibited by N-(12-imidazolyl-dodecanoyl)-L-leucine. Functionally, functions as a fatty acid monooxygenase. Catalyzes hydroxylation of fatty acids at omega-1, omega-2 and omega-3 positions. Shows activity toward medium and long-chain fatty acids, with optimum chain lengths of 12, 14 and 16 carbons (lauric, myristic, and palmitic acids). Able to metabolize some of these primary metabolites to secondary and tertiary products. Marginal activity towards short chain lengths of 8-10 carbons. Hydroxylates highly branched fatty acids, which play an essential role in membrane fluidity regulation. Also displays a NADPH-dependent reductase activity in the C-terminal domain, which allows electron transfer from NADPH to the heme iron of the cytochrome P450 N-terminal domain. Involved in inactivation of quorum sensing signals of other competing bacteria by oxidazing efficiently acyl homoserine lactones (AHLs), molecules involved in quorum sensing signaling pathways, and their lactonolysis products acyl homoserines (AHs). This Priestia megaterium (strain ATCC 14581 / DSM 32 / CCUG 1817 / JCM 2506 / NBRC 15308 / NCIMB 9376 / NCTC 10342 / NRRL B-14308 / VKM B-512 / Ford 19) (Bacillus megaterium) protein is Bifunctional cytochrome P450/NADPH--P450 reductase.